The sequence spans 226 residues: MQLSPVTLPTTAEEAMAVQDDLRARVVAANPRPPVFATVAGVDSAYDDAAGLVATAVVVLDTATLEPIESAVAHGPVRFPYVPGLLAFRELPTTLSALEQLRTTPDLLVCDAQGLAHPRRFGLACHVGVRTGLPTIGVAKNAWGAWTEPGRRRGDAAELVLDGEVVGLALRTRDDVKPVFVSVGHHIDLPTAREQVLALTPRYRQPETTRQADRLCRAALRAATGG.

Mg(2+) is bound by residues D43 and D111.

The protein belongs to the endonuclease V family. The cofactor is Mg(2+).

It localises to the cytoplasm. The catalysed reaction is Endonucleolytic cleavage at apurinic or apyrimidinic sites to products with a 5'-phosphate.. DNA repair enzyme involved in the repair of deaminated bases. Selectively cleaves double-stranded DNA at the second phosphodiester bond 3' to a deoxyinosine leaving behind the intact lesion on the nicked DNA. The polypeptide is Endonuclease V (Nocardia farcinica (strain IFM 10152)).